We begin with the raw amino-acid sequence, 95 residues long: Cobalt transport protein CbiN (95 aa).

A run of 2 helical transmembrane segments spans residues 5–25 (HIILLAIVAIIIALPLIIYAG) and 67–87 (LLFALQAAIGAIIIGYYIGYY).

Belongs to the CbiN family. As to quaternary structure, forms an energy-coupling factor (ECF) transporter complex composed of an ATP-binding protein (A component, CbiO), a transmembrane protein (T component, CbiQ) and 2 possible substrate-capture proteins (S components, CbiM and CbiN) of unknown stoichimetry.

The protein localises to the cell membrane. The protein operates within cofactor biosynthesis; adenosylcobalamin biosynthesis. Part of the energy-coupling factor (ECF) transporter complex CbiMNOQ involved in cobalt import. This Methanocaldococcus jannaschii (strain ATCC 43067 / DSM 2661 / JAL-1 / JCM 10045 / NBRC 100440) (Methanococcus jannaschii) protein is Cobalt transport protein CbiN.